The following is a 161-amino-acid chain: UPF0225 protein NTHI0386 (161 aa).

Belongs to the UPF0225 family.

The chain is UPF0225 protein NTHI0386 from Haemophilus influenzae (strain 86-028NP).